Reading from the N-terminus, the 547-residue chain is Threonylcarbamoyladenosine tRNA methylthiotransferase (547 aa).

The segment at 30–51 is disordered; that stretch reads ARKSVVPRARKHKQETGEQMQT. In terms of domain architecture, MTTase N-terminal spans 59–167; the sequence is QKVWLKTWGC…VVEVVDEAIK (109 aa). Positions 68, 104, 133, 209, 213, and 216 each coordinate [4Fe-4S] cluster. A Radical SAM core domain is found at 195-426; sequence RKNPLIEIIS…ALFHSYRPYD (232 aa). The TRAM domain occupies 426–488; it reads DHKMGEQQQV…KHYMKGRPLE (63 aa). A helical transmembrane segment spans residues 527-547; the sequence is ILAVVLLLSAVLLALLMEKLL.

This sequence belongs to the methylthiotransferase family. CDKAL1 subfamily. [4Fe-4S] cluster serves as cofactor.

The protein localises to the endoplasmic reticulum membrane. The enzyme catalyses N(6)-L-threonylcarbamoyladenosine(37) in tRNA + (sulfur carrier)-SH + AH2 + 2 S-adenosyl-L-methionine = 2-methylsulfanyl-N(6)-L-threonylcarbamoyladenosine(37) in tRNA + (sulfur carrier)-H + 5'-deoxyadenosine + L-methionine + A + S-adenosyl-L-homocysteine + 2 H(+). In terms of biological role, catalyzes the methylthiolation of N6-threonylcarbamoyladenosine (t(6)A), leading to the formation of 2-methylthio-N6-threonylcarbamoyladenosine (ms(2)t(6)A) at position 37 in tRNAs that read codons beginning with adenine. This chain is Threonylcarbamoyladenosine tRNA methylthiotransferase (cdkal1), found in Danio rerio (Zebrafish).